The following is an 82-amino-acid chain: MREGIHPAYAPVVFRDRAANHAFLTRSTMTSEKTVEWTDGHTYPVVDVEISNVSHPFYTGTARVLDTAGRVERFERRYGKGS.

Belongs to the bacterial ribosomal protein bL31 family. Type B subfamily. As to quaternary structure, part of the 50S ribosomal subunit.

In Streptomyces avermitilis (strain ATCC 31267 / DSM 46492 / JCM 5070 / NBRC 14893 / NCIMB 12804 / NRRL 8165 / MA-4680), this protein is Large ribosomal subunit protein bL31B-2.